Reading from the N-terminus, the 66-residue chain is MKTLTFYTLLLCAALYSNFFDCKAVADAELPKLPDDKVLIRSRSNCPKGKVWNGFDCKSPFAFSKK.

The N-terminal stretch at 1 to 26 (MKTLTFYTLLLCAALYSNFFDCKAVA) is a signal peptide. C46 and C57 are joined by a disulfide.

Its subcellular location is the secreted. Functionally, possesses antifungal activity against phytopathogenic fungi such as P.oryzae, R.solani and B.cinerea but not against phytopathogenic bacteria. Shows weak activity against the insect pathogenic fungus B.bassiana and against S.aureus. Binds chitin. The sequence is that of Scarabaecin from Oryctes rhinoceros (Coconut rhinoceros beetle).